The following is a 264-amino-acid chain: Anamorsin homolog 2 (264 aa).

The interval 1-142 (MAATAAALAV…KVSWSMGSSF (142 aa)) is N-terminal SAM-like domain. Residues 143–174 (PLKKATKGLPKIQIDDDSELIDEDSLLTEDDL) are linker. [2Fe-2S] cluster is bound by residues C185, C194, C197, and C199. Positions 185–199 (CEVGATRKACKNCTC) are fe-S binding site A. 4 residues coordinate [4Fe-4S] cluster: C225, C228, C236, and C239. Short sequence motifs (cx2C motif) lie at residues 225-228 (CGNC) and 236-239 (CGTC). The fe-S binding site B stretch occupies residues 225–239 (CGNCGLGDAFRCGTC).

This sequence belongs to the anamorsin family. In terms of assembly, monomer. Requires [2Fe-2S] cluster as cofactor. It depends on [4Fe-4S] cluster as a cofactor.

Its subcellular location is the cytoplasm. The protein resides in the mitochondrion intermembrane space. Component of the cytosolic iron-sulfur (Fe-S) protein assembly (CIA) machinery. Required for the maturation of extramitochondrial Fe-S proteins. Part of an electron transfer chain functioning in an early step of cytosolic Fe-S biogenesis, facilitating the de novo assembly of a [4Fe-4S] cluster on the cytosolic Fe-S scaffold complex. Electrons are transferred from NADPH via a FAD- and FMN-containing diflavin oxidoreductase. Together with the diflavin oxidoreductase, also required for the assembly of the diferric tyrosyl radical cofactor of ribonucleotide reductase (RNR), probably by providing electrons for reduction during radical cofactor maturation in the catalytic small subunit. This chain is Anamorsin homolog 2, found in Oryza sativa subsp. indica (Rice).